Consider the following 135-residue polypeptide: RuBisCO chaperone RbcX (135 aa).

Positions Gln-103–Ser-135 are disordered. The span at Thr-109 to Ser-126 shows a compositional bias: polar residues.

It belongs to the RbcX family. In terms of assembly, homodimer. Interacts with the exposed C-terminal peptide of RbcL ('Glu-459-Asp-468'); binds 1 RbcL peptide per homodimer. Contacts a second RbcL monomer via its peripheral polar surface. A slightly longer RbcL peptide binds to RbcX2 with a higher affinity.

Its subcellular location is the carboxysome. The protein resides in the cytoplasm. Its function is as follows. An RbcL-specific chaperone. The central cleft of the RbcX homodimer (RbcX2) binds the C-terminus of an RbcL monomer, stabilizing the C-terminus and probably preventing its reassociation with chaperonin GroEL-ES. At the same time the peripheral region of RbcX2 binds a second RbcL monomer, bridging the RbcL homodimers in the correct orientation. The RbcX2(2)-bound RbcL dimers then assemble into the RbcL8 core (RbcL8-(RbcX2)8). RbcS binding triggers the release of RbcX2. In terms of biological role, required for optimal reconstitution of RuBisCO upon expression of rbcL-rbcS subunits in E.coli. The chain is RuBisCO chaperone RbcX from Anabaena sp. (strain CA / ATCC 33047).